We begin with the raw amino-acid sequence, 302 residues long: Recombination-associated protein RdgC (302 aa).

This sequence belongs to the RdgC family.

The protein localises to the cytoplasm. It localises to the nucleoid. In terms of biological role, may be involved in recombination. This is Recombination-associated protein RdgC from Xylella fastidiosa (strain M23).